We begin with the raw amino-acid sequence, 277 residues long: MELIEKHASFGGWQNVYRHYSQSLKCEMNVGVYLPPKAENEKLPVLYWLSGLTCNEQNFITKSGMQRYAAEHNIIVVAPDTSPRGSHVADADRYDLGQGAGFYLNATQAPWNEHYKMYDYIRNELPNLVMHHFPATARKSISGHSMGGLGALVLALRNPDEYASVSAFSPIVSPSQVPWGQQAFAAYLGENKDAWLDYDPVSLISQGQRVAEIMVDQGLSDDFYAEQLRTPNLEKICQEMNIKTLIRYHEGYDHSYYFVSSFIGEHIAYHANKLNMR.

Residues S145, D221, and H254 each act as charge relay system in the active site.

The protein belongs to the esterase D family.

The catalysed reaction is S-formylglutathione + H2O = formate + glutathione + H(+). In terms of biological role, serine hydrolase involved in the detoxification of formaldehyde. Hydrolyzes S-formylglutathione to glutathione and formate. The protein is S-formylglutathione hydrolase FrmB (frmB) of Escherichia coli O6:K15:H31 (strain 536 / UPEC).